The primary structure comprises 249 residues: MAAPKAEGEDKPKRVRKSRAKPKPETKEVKKPKSKEFCTADDSSDDYNEVKPSPAMIALMAVKEIPESEDVPDKSDSEAEAPVPAIVKKRRTPPKKAESSDDKKLDEATGEQVIDEDALSKLTIQTLKGMCKTRNLKISGNKAALVQRLIEADGIAHIIPTTATVVQKVKKTKRPAVFSKVDSELKLIPCPGREHMLMDEATGLVFLDEDPSTAVGFIEHGEVFGLDSEHMTVCKNMGIRYSWTEDYLC.

Composition is skewed to basic and acidic residues over residues 1–12 (MAAPKAEGEDKP), 22–38 (PKPE…KEFC), and 95–107 (KKAE…KLDE). Residues 1-110 (MAAPKAEGED…DDKKLDEATG (110 aa)) form a disordered region. The SAP domain occupies 119-153 (LSKLTIQTLKGMCKTRNLKISGNKAALVQRLIEAD).

The protein is Putative SAP domain-containing protein 049L of Frog virus 3 (isolate Goorha) (FV-3).